The following is an 82-amino-acid chain: Small ribosomal subunit protein uS17 (82 aa).

It belongs to the universal ribosomal protein uS17 family. In terms of assembly, part of the 30S ribosomal subunit.

Functionally, one of the primary rRNA binding proteins, it binds specifically to the 5'-end of 16S ribosomal RNA. This Tolumonas auensis (strain DSM 9187 / NBRC 110442 / TA 4) protein is Small ribosomal subunit protein uS17.